Consider the following 288-residue polypeptide: Serine/threonine-protein kinase pef1 (288 aa).

In terms of domain architecture, Protein kinase spans 3–285; sequence YQRLEKLGEG…GQDALQHAWF (283 aa). Residues 9–17 and lysine 32 each bind ATP; that span reads LGEGTYAHV. Phosphothreonine is present on threonine 13. Tyrosine 14 bears the Phosphotyrosine mark. The Proton acceptor role is filled by aspartate 126.

It belongs to the protein kinase superfamily. CMGC Ser/Thr protein kinase family. CDC2/CDKX subfamily. In terms of assembly, interacts with the pas1 cyclin.

It catalyses the reaction L-seryl-[protein] + ATP = O-phospho-L-seryl-[protein] + ADP + H(+). The enzyme catalyses L-threonyl-[protein] + ATP = O-phospho-L-threonyl-[protein] + ADP + H(+). In Schizosaccharomyces pombe (strain 972 / ATCC 24843) (Fission yeast), this protein is Serine/threonine-protein kinase pef1 (pef1).